Here is a 183-residue protein sequence, read N- to C-terminus: MKTLEESIDALMTRYKENVPVRYTEYVEEWNSPIYGTVIDENTVEWTPCRQPEALNFDDLESALEMSFHQSIKTLFGRWYAGDLALDYQGHTISLLQTQSAEDGERLLENITGHILMKRRLKQPETVFIGLGSEDDGLLVTIDNQSGAVGLEWVGKEQHDVLSDSLAAWLDNCQPQVETDKNS.

Belongs to the Syd family.

It is found in the cell inner membrane. In terms of biological role, interacts with the SecY protein in vivo. May bind preferentially to an uncomplexed state of SecY, thus functioning either as a chelating agent for excess SecY in the cell or as a regulatory factor that negatively controls the translocase function. This chain is Protein Syd, found in Idiomarina loihiensis (strain ATCC BAA-735 / DSM 15497 / L2-TR).